A 473-amino-acid polypeptide reads, in one-letter code: Bifunctional protein HldE (473 aa).

Positions 1-318 (MKLSMPRFDQ…RAIQREEGSE (318 aa)) are ribokinase. Residue 194–197 (NLSE) coordinates ATP. The active site involves D263. A cytidylyltransferase region spans residues 343 to 473 (FTNGCFDILH…TAIVEKIRKH (131 aa)).

In the N-terminal section; belongs to the carbohydrate kinase PfkB family. The protein in the C-terminal section; belongs to the cytidylyltransferase family. In terms of assembly, homodimer.

The catalysed reaction is D-glycero-beta-D-manno-heptose 7-phosphate + ATP = D-glycero-beta-D-manno-heptose 1,7-bisphosphate + ADP + H(+). It catalyses the reaction D-glycero-beta-D-manno-heptose 1-phosphate + ATP + H(+) = ADP-D-glycero-beta-D-manno-heptose + diphosphate. Its pathway is nucleotide-sugar biosynthesis; ADP-L-glycero-beta-D-manno-heptose biosynthesis; ADP-L-glycero-beta-D-manno-heptose from D-glycero-beta-D-manno-heptose 7-phosphate: step 1/4. The protein operates within nucleotide-sugar biosynthesis; ADP-L-glycero-beta-D-manno-heptose biosynthesis; ADP-L-glycero-beta-D-manno-heptose from D-glycero-beta-D-manno-heptose 7-phosphate: step 3/4. Functionally, catalyzes the phosphorylation of D-glycero-D-manno-heptose 7-phosphate at the C-1 position to selectively form D-glycero-beta-D-manno-heptose-1,7-bisphosphate. Its function is as follows. Catalyzes the ADP transfer from ATP to D-glycero-beta-D-manno-heptose 1-phosphate, yielding ADP-D-glycero-beta-D-manno-heptose. This chain is Bifunctional protein HldE, found in Pseudomonas entomophila (strain L48).